The primary structure comprises 384 residues: 8-amino-7-oxononanoate synthase (384 aa).

Position 21 (Arg21) interacts with substrate. 108–109 (GF) lines the pyridoxal 5'-phosphate pocket. His133 serves as a coordination point for substrate. Pyridoxal 5'-phosphate is bound by residues Ser179, His207, and Thr233. At Lys236 the chain carries N6-(pyridoxal phosphate)lysine. Thr352 provides a ligand contact to substrate.

The protein belongs to the class-II pyridoxal-phosphate-dependent aminotransferase family. BioF subfamily. In terms of assembly, homodimer. Pyridoxal 5'-phosphate serves as cofactor.

The catalysed reaction is 6-carboxyhexanoyl-[ACP] + L-alanine + H(+) = (8S)-8-amino-7-oxononanoate + holo-[ACP] + CO2. The protein operates within cofactor biosynthesis; biotin biosynthesis. Its function is as follows. Catalyzes the decarboxylative condensation of pimeloyl-[acyl-carrier protein] and L-alanine to produce 8-amino-7-oxononanoate (AON), [acyl-carrier protein], and carbon dioxide. The sequence is that of 8-amino-7-oxononanoate synthase from Escherichia coli O6:H1 (strain CFT073 / ATCC 700928 / UPEC).